Consider the following 296-residue polypeptide: Protein csh3 (296 aa).

Residues 46-138 form a disordered region; that stretch reads ASPVTAPAAQ…PPSYPGPNTA (93 aa). Residues 93 to 103 show a composition bias toward basic and acidic residues; sequence GEKRTPEEPRK. The segment covering 111 to 124 has biased composition (polar residues); that stretch reads QKQSEASSVNSSTE. An SH3 domain is found at 140–199; sequence KNVERVLAMYDFPGPDAGDLGFHAGEVIIVLEHVNNDWWRGELNGKEGIFPSNYVRLLED. A disordered region spans residues 202–246; the sequence is VKAQPPPPPPQQNYPPAASSSAPPMQYQQTAYPPQQAPYPPVQAY. Residues 205–214 are compositionally biased toward pro residues; sequence QPPPPPPQQN. The segment covering 215–235 has biased composition (low complexity); it reads YPPAASSSAPPMQYQQTAYPP.

The sequence is that of Protein csh3 (csh3) from Schizosaccharomyces pombe (strain 972 / ATCC 24843) (Fission yeast).